Reading from the N-terminus, the 545-residue chain is Hydroxylamine reductase (545 aa).

4 residues coordinate [4Fe-4S] cluster: Cys3, Cys6, Cys15, and Cys21. Residues His241, Glu265, Cys309, Cys396, Cys424, Cys449, Glu483, and Lys485 each coordinate hybrid [4Fe-2O-2S] cluster. At Cys396 the chain carries Cysteine persulfide.

It belongs to the HCP family. It depends on [4Fe-4S] cluster as a cofactor. Hybrid [4Fe-2O-2S] cluster serves as cofactor.

The protein localises to the cytoplasm. The enzyme catalyses A + NH4(+) + H2O = hydroxylamine + AH2 + H(+). In terms of biological role, catalyzes the reduction of hydroxylamine to form NH(3) and H(2)O. The polypeptide is Hydroxylamine reductase (Zymomonas mobilis subsp. mobilis (strain ATCC 31821 / ZM4 / CP4)).